Reading from the N-terminus, the 1107-residue chain is Phospholipid-transporting ATPase 2 (1107 aa).

Topologically, residues 1–33 are cytoplasmic; sequence MKRFVYINDDEASKELCCDNRISNRKYTLWNFL. Residues 34 to 55 traverse the membrane as a helical segment; the sequence is PKNLWEQFSRFMNQYFLLIACL. The Extracellular segment spans residues 56–60; the sequence is QLWSL. A helical transmembrane segment spans residues 61–83; it reads ITPVNPASTWGPLIFIFAVSASK. Residues 84–268 are Cytoplasmic-facing; sequence EAWDDYHRYL…TAMDAMIDKL (185 aa). A helical membrane pass occupies residues 269–290; sequence TGAIFVFQIVVVLVLGIAGNVW. At 291 to 315 the chain is on the extracellular side; that stretch reads KDTEARKQWYVQYPEEAPWYELLVI. Residues 316-333 traverse the membrane as a helical segment; sequence PLRFELLCSIMIPISIKV. At 334–807 the chain is on the cytoplasmic side; that stretch reads SLDLVKGLYA…HGRYSYNRTA (474 aa). The 4-aspartylphosphate intermediate role is filled by D381. The Mg(2+) site is built by D752 and D756. The chain crosses the membrane as a helical span at residues 808–827; that stretch reads FLSQYSFYKSLLICFIQIFF. Residues 828–841 lie on the Extracellular side of the membrane; that stretch reads SFISGVSGTSLFNS. Residues 842–860 traverse the membrane as a helical segment; it reads VSLMAYNVFYTSVPVLVSV. At 861–890 the chain is on the cytoplasmic side; the sequence is IDKDLSEASVMQHPQILFYCQAGRLLNPST. The chain crosses the membrane as a helical span at residues 891-912; it reads FAGWFGRSLFHAIIVFVITIHA. Residues 913-919 lie on the Extracellular side of the membrane; it reads YAYEKSE. The chain crosses the membrane as a helical span at residues 920–942; sequence MEELGMVALSGCIWLQAFVVAQE. Over 943–948 the chain is Cytoplasmic; sequence TNSFTV. A helical transmembrane segment spans residues 949–969; it reads LQHLSIWGNLVGFYAINFLFS. At 970 to 982 the chain is on the extracellular side; the sequence is AIPSSGMYTIMFR. A helical membrane pass occupies residues 983-1007; sequence LCSQPSYWITMFLIVGAGMGPIFAL. The Cytoplasmic segment spans residues 1008-1107; that stretch reads KYFRYTYRPS…SGYTRNCKDN (100 aa). Residues 1048–1075 are disordered; sequence DLSPISITQPKNRSPVYEPLLSDSPNAT. Residue S1050 is modified to Phosphoserine.

Belongs to the cation transport ATPase (P-type) (TC 3.A.3) family. Type IV subfamily. Interacts with ALIS1, ALIS3 and ALIS5 in a heterologous system.

The protein resides in the endoplasmic reticulum membrane. It is found in the prevacuolar compartment membrane. It carries out the reaction ATP + H2O + phospholipidSide 1 = ADP + phosphate + phospholipidSide 2.. Involved in transport of phospholipids. Contributes to transmembrane flipping of lipids. Requires an interaction with a protein of the ALIS family for activity. Specific for phosphatidylserine and has no activity with lysolipid, phosphatidylcholine or phosphatidylethanolamine. This is Phospholipid-transporting ATPase 2 from Arabidopsis thaliana (Mouse-ear cress).